Here is a 340-residue protein sequence, read N- to C-terminus: Glyceraldehyde-3-phosphate dehydrogenase, cytosolic (340 aa).

NAD(+)-binding positions include 16–17 (RI), Asp38, and Arg85. D-glyceraldehyde 3-phosphate is bound by residues 156–158 (SCT), Thr187, 216–217 (TG), and Arg239. Cys157 functions as the Nucleophile in the catalytic mechanism. NAD(+) is bound at residue Asn321.

This sequence belongs to the glyceraldehyde-3-phosphate dehydrogenase family. As to quaternary structure, homotetramer.

The protein resides in the cytoplasm. The catalysed reaction is D-glyceraldehyde 3-phosphate + phosphate + NAD(+) = (2R)-3-phospho-glyceroyl phosphate + NADH + H(+). It participates in carbohydrate degradation; glycolysis; pyruvate from D-glyceraldehyde 3-phosphate: step 1/5. In terms of biological role, key enzyme in glycolysis that catalyzes the first step of the pathway by converting D-glyceraldehyde 3-phosphate (G3P) into 3-phospho-D-glyceroyl phosphate. Essential for the maintenance of cellular ATP levels and carbohydrate metabolism. This is Glyceraldehyde-3-phosphate dehydrogenase, cytosolic from Taxus baccata (English yew).